Consider the following 448-residue polypeptide: Charged multivesicular body protein 7 (448 aa).

Positions 1 to 12 (MCSPGRAPPGPA) are enriched in pro residues. Residues 1–20 (MCSPGRAPPGPAPAGDLPPE) form a disordered region. The stretch at 241 to 392 (QLMQSEQLLS…DSLLQDSAKE (152 aa)) forms a coiled coil.

The protein belongs to the SNF7 family.

The protein localises to the cytoplasm. The protein resides in the nucleus envelope. Its function is as follows. ESCRT-III-like protein required to recruit the ESCRT-III complex to the nuclear envelope (NE) during late anaphase. Together with SPAST, the ESCRT-III complex promotes NE sealing and mitotic spindle disassembly during late anaphase. Recruited to the reforming NE during anaphase by LEMD2. Plays a role in the endosomal sorting pathway. This chain is Charged multivesicular body protein 7 (CHMP7), found in Gallus gallus (Chicken).